Reading from the N-terminus, the 274-residue chain is Glutamate racemase (274 aa).

Residues 9-10 (DS) and 41-42 (YG) each bind substrate. Residue C73 is the Proton donor/acceptor of the active site. A substrate-binding site is contributed by 74–75 (NT). Residue C183 is the Proton donor/acceptor of the active site. 184–185 (TH) provides a ligand contact to substrate.

The protein belongs to the aspartate/glutamate racemases family.

The enzyme catalyses L-glutamate = D-glutamate. Its pathway is cell wall biogenesis; peptidoglycan biosynthesis. Provides the (R)-glutamate required for cell wall biosynthesis. In Shewanella baltica (strain OS155 / ATCC BAA-1091), this protein is Glutamate racemase.